The chain runs to 885 residues: Phycobiliprotein ApcE (885 aa).

Cys185 lines the (2R,3E)-phycocyanobilin pocket. PBS-linker domains lie at 242-422 (DVQG…FRKV), 498-680 (KSIG…NSKK), and 694-871 (NSIQ…KQSS).

It belongs to the phycobilisome linker protein family. Contains one covalently linked bilin chromophore. This protein autochromophorylates (Potential).

The protein resides in the plastid. It is found in the chloroplast thylakoid membrane. Functionally, this protein is postulated to act both as terminal energy acceptor and as a linker polypeptide that stabilizes the phycobilisome architecture. May have intrinsic bilin lyase activity. The polypeptide is Phycobiliprotein ApcE (apcE) (Aglaothamnion neglectum (Red alga)).